The sequence spans 350 residues: Aminomethyltransferase (350 aa).

The protein belongs to the GcvT family. In terms of assembly, the glycine cleavage system is composed of four proteins: P, T, L and H.

It carries out the reaction N(6)-[(R)-S(8)-aminomethyldihydrolipoyl]-L-lysyl-[protein] + (6S)-5,6,7,8-tetrahydrofolate = N(6)-[(R)-dihydrolipoyl]-L-lysyl-[protein] + (6R)-5,10-methylene-5,6,7,8-tetrahydrofolate + NH4(+). The glycine cleavage system catalyzes the degradation of glycine. This Aquifex aeolicus (strain VF5) protein is Aminomethyltransferase.